We begin with the raw amino-acid sequence, 310 residues long: tRNA uridine(34) hydroxylase (310 aa).

Residues 127 to 225 enclose the Rhodanese domain; the sequence is KNQNTIVIDT…YLDDIPKEKN (99 aa). The active-site Cysteine persulfide intermediate is the Cys-185.

Belongs to the TrhO family.

The enzyme catalyses uridine(34) in tRNA + AH2 + O2 = 5-hydroxyuridine(34) in tRNA + A + H2O. Functionally, catalyzes oxygen-dependent 5-hydroxyuridine (ho5U) modification at position 34 in tRNAs. This is tRNA uridine(34) hydroxylase from Prochlorococcus marinus (strain MIT 9312).